A 488-amino-acid polypeptide reads, in one-letter code: Ribosomal RNA small subunit methyltransferase F (488 aa).

Residues 135–141 (ASAPGSK), Glu-159, Asp-186, and Asp-204 each bind S-adenosyl-L-methionine. The active-site Nucleophile is the Cys-257.

It belongs to the class I-like SAM-binding methyltransferase superfamily. RsmB/NOP family.

Its subcellular location is the cytoplasm. It carries out the reaction cytidine(1407) in 16S rRNA + S-adenosyl-L-methionine = 5-methylcytidine(1407) in 16S rRNA + S-adenosyl-L-homocysteine + H(+). Functionally, specifically methylates the cytosine at position 1407 (m5C1407) of 16S rRNA. The polypeptide is Ribosomal RNA small subunit methyltransferase F (Shewanella pealeana (strain ATCC 700345 / ANG-SQ1)).